An 80-amino-acid polypeptide reads, in one-letter code: Putative defensin-like protein 28 (80 aa).

The signal sequence occupies residues 1–22 (MLRANVVVSLVIFAALMQCMNG).

The protein belongs to the DEFL family.

Its subcellular location is the secreted. The polypeptide is Putative defensin-like protein 28 (Arabidopsis thaliana (Mouse-ear cress)).